We begin with the raw amino-acid sequence, 150 residues long: STGGTDLAAQIIHKYTGLSLGMCVILIDGLIVLTAAFVFDIERALYALIALYVTSKTIDLVQVGLGYSKIALIITNEEEKVRRAILHEIDRGVTRLPAYGGYTEHERPVLMCVVAQSEFTKLKQLVRTIDPTAFVIVANAAEVLGEGFQR.

A helical membrane pass occupies residues 19-39 (SLGMCVILIDGLIVLTAAFVF).

To B.subtilis YpjC, YqfU and YitT.

It localises to the cell membrane. This is an uncharacterized protein from Bacillus sp. (strain PS3).